The chain runs to 157 residues: Urease accessory protein UreE (157 aa).

This sequence belongs to the UreE family.

The protein localises to the cytoplasm. Its function is as follows. Involved in urease metallocenter assembly. Binds nickel. Probably functions as a nickel donor during metallocenter assembly. The polypeptide is Urease accessory protein UreE (Corynebacterium glutamicum (strain R)).